Here is a 215-residue protein sequence, read N- to C-terminus: Putative O-methyltransferase MAB_1361c (215 aa).

S-adenosyl-L-methionine-binding positions include Val-42, Glu-64, 66–67, Ser-72, Asp-90, and Val-91; that span reads GT. Asp-138 lines the substrate pocket.

Belongs to the class I-like SAM-binding methyltransferase superfamily. Cation-dependent O-methyltransferase family.

This is Putative O-methyltransferase MAB_1361c from Mycobacteroides abscessus (strain ATCC 19977 / DSM 44196 / CCUG 20993 / CIP 104536 / JCM 13569 / NCTC 13031 / TMC 1543 / L948) (Mycobacterium abscessus).